The chain runs to 468 residues: uncharacterized protein (468 aa).

The interval 447-468 (AVHVSNGDKPKVALPDTQLGSH) is disordered.

This sequence belongs to the mycobacterial PPE family.

This is an uncharacterized protein from Mycobacterium tuberculosis (strain ATCC 25618 / H37Rv).